The sequence spans 546 residues: Chaperonin GroEL (546 aa).

Residues 30 to 33 (TLGP), K51, 87 to 91 (DGTTT), G415, 479 to 481 (NAA), and D495 contribute to the ATP site.

The protein belongs to the chaperonin (HSP60) family. In terms of assembly, forms a cylinder of 14 subunits composed of two heptameric rings stacked back-to-back. Interacts with the co-chaperonin GroES.

It localises to the cytoplasm. It carries out the reaction ATP + H2O + a folded polypeptide = ADP + phosphate + an unfolded polypeptide.. Its function is as follows. Together with its co-chaperonin GroES, plays an essential role in assisting protein folding. The GroEL-GroES system forms a nano-cage that allows encapsulation of the non-native substrate proteins and provides a physical environment optimized to promote and accelerate protein folding. This is Chaperonin GroEL from Pseudomonas putida (strain W619).